Here is a 67-residue protein sequence, read N- to C-terminus: DNA-directed RNA polymerases I, II, and III subunit RPABC5 (67 aa).

Zn(2+)-binding residues include cysteine 7, cysteine 10, cysteine 44, and cysteine 45.

It belongs to the archaeal Rpo10/eukaryotic RPB10 RNA polymerase subunit family. As to quaternary structure, component of the RNA polymerase I (Pol I), RNA polymerase II (Pol II) and RNA polymerase III (Pol III) complexes consisting of at least 13, 12 and 17 subunits, respectively.

It localises to the nucleus. DNA-dependent RNA polymerase catalyzes the transcription of DNA into RNA using the four ribonucleoside triphosphates as substrates. Common component of RNA polymerases I, II and III which synthesize ribosomal RNA precursors, mRNA precursors and many functional non-coding RNAs, and a small RNAs, such as 5S rRNA and tRNAs, respectively. Pol II is the central component of the basal RNA polymerase II transcription machinery. Pols are composed of mobile elements that move relative to each other. In Pol II, Polr2L is part of the core element with the central large cleft. The chain is DNA-directed RNA polymerases I, II, and III subunit RPABC5 from Drosophila melanogaster (Fruit fly).